The chain runs to 308 residues: Pantothenate synthetase (308 aa).

Position 39–46 (39–46) interacts with ATP; that stretch reads MGALHDGH. Residue His-46 is the Proton donor of the active site. Gln-71 serves as a coordination point for (R)-pantoate. Gln-71 contacts beta-alanine. 157 to 160 provides a ligand contact to ATP; it reads GEKD. Residue Gln-163 coordinates (R)-pantoate. ATP contacts are provided by residues Val-186 and 194 to 197; that span reads MSSR. Residues 286 to 308 form a disordered region; the sequence is IETPAGTAGPDGDRQYAQSPWRN.

This sequence belongs to the pantothenate synthetase family. Homodimer.

It localises to the cytoplasm. It catalyses the reaction (R)-pantoate + beta-alanine + ATP = (R)-pantothenate + AMP + diphosphate + H(+). It participates in cofactor biosynthesis; (R)-pantothenate biosynthesis; (R)-pantothenate from (R)-pantoate and beta-alanine: step 1/1. Functionally, catalyzes the condensation of pantoate with beta-alanine in an ATP-dependent reaction via a pantoyl-adenylate intermediate. The sequence is that of Pantothenate synthetase from Mycobacterium avium (strain 104).